We begin with the raw amino-acid sequence, 69 residues long: Protein SlyX homolog (69 aa).

This sequence belongs to the SlyX family.

The sequence is that of Protein SlyX homolog from Pseudomonas aeruginosa (strain LESB58).